The sequence spans 140 residues: MTNIDVISDMLTRIRNSLLIKARKVNVINTKLTVNIAEILKKEGFIDSFELADATCLTENGVIKKYITIFLKYKGPKQVSYITKIKRVSKPGLRTYSSYKRLQSVAGGVGLTVLSTSKGLMTDRLARSNKIGGEILFYIW.

Belongs to the universal ribosomal protein uS8 family. Part of the 30S ribosomal subunit.

The protein localises to the plastid. The protein resides in the chloroplast. In terms of biological role, one of the primary rRNA binding proteins, it binds directly to 16S rRNA central domain where it helps coordinate assembly of the platform of the 30S subunit. The sequence is that of Small ribosomal subunit protein uS8c (rps8) from Euglena gracilis.